The chain runs to 2563 residues: Highly reducing polyketide synthase 2 (2563 aa).

The region spanning 11 to 451 (MSDIAIVGYS…GSNSHIVLDD (441 aa)) is the Ketosynthase family 3 (KS3) domain. Catalysis depends on for beta-ketoacyl synthase activity residues cysteine 182, histidine 317, and histidine 357. Residues 589–890 (FAFTGQGAQY…DTLSEMSSAS (302 aa)) enclose the Malonyl-CoA:ACP transacylase (MAT) domain. The tract at residues 970–1101 (GELLGVRVSD…ANISVEFQDN (132 aa)) is N-terminal hotdog fold. The PKS/mFAS DH domain occupies 970 to 1269 (GELLGVRVSD…TSAVSGGITH (300 aa)). Histidine 1002 (proton acceptor; for dehydratase activity) is an active-site residue. The C-terminal hotdog fold stretch occupies residues 1126–1269 (TLPIDPRVFY…TSAVSGGITH (144 aa)). The active-site Proton donor; for dehydratase activity is aspartate 1186. Positions 1296 to 1618 (FAANAVPKDD…FSGNDLVIRD (323 aa)) are methyltransferase (CMet) domain. The Enoyl reductase (ER) domain occupies 1858–2168 (GSLDSLQFVE…QEDTSERVIV (311 aa)). The region spanning 2192–2370 (STYLVAGGSG…ALSLDIGWMS (179 aa)) is the Ketoreductase (KR) domain. One can recognise a Carrier domain in the interval 2480–2561 (SDARERQQVV…GVAEVVEARS (82 aa)). O-(pantetheine 4'-phosphoryl)serine is present on serine 2521.

Pantetheine 4'-phosphate is required as a cofactor.

It participates in secondary metabolite biosynthesis. Functionally, highly reducing polyketide synthase; part of the gene cluster that mediates the biosynthesis of the tetraketides fugralins such as linear fugralin A and cyclic fugralin B, volatile compounds that play a role in the asexual reproductive cycle but are not involved in pathogenicity. One of the key features of fugralins is the presence of a double methyl group, which is only rarely encountered in fungal secondary metabolites. As the fugralins cluster does not contain an independent methyltransferase, the PKS FGR1 is probably responsible for adding two methyl groups to the same carbon atom. Fugralin B is similar to fugralin A except for a cyclization between the carboxylic acid C-8 and the alcohol on C-4 resulting in a six membered lactone ring, probably catalyzed by the cyclase FGR4. The exact role of the individual cluster genes remains unknown and further work is needed to unravel the biosynthetic pathway. The sequence is that of Highly reducing polyketide synthase 2 from Gibberella zeae (strain ATCC MYA-4620 / CBS 123657 / FGSC 9075 / NRRL 31084 / PH-1) (Wheat head blight fungus).